The chain runs to 454 residues: Bifunctional protein GlmU (454 aa).

The interval methionine 1–arginine 226 is pyrophosphorylase. UDP-N-acetyl-alpha-D-glucosamine is bound by residues leucine 8–glycine 11, lysine 22, glutamine 73, glycine 78–threonine 79, tyrosine 100–aspartate 102, glycine 137, glutamate 151, asparagine 166, and asparagine 224. Residue aspartate 102 coordinates Mg(2+). Asparagine 224 contacts Mg(2+). Positions valine 227–alanine 247 are linker. The tract at residues glycine 248–lysine 454 is N-acetyltransferase. 2 residues coordinate UDP-N-acetyl-alpha-D-glucosamine: arginine 330 and lysine 348. Histidine 360 serves as the catalytic Proton acceptor. 2 residues coordinate UDP-N-acetyl-alpha-D-glucosamine: tyrosine 363 and asparagine 374. Acetyl-CoA is bound by residues alanine 377, asparagine 383–tyrosine 384, serine 402, alanine 420, and arginine 437.

This sequence in the N-terminal section; belongs to the N-acetylglucosamine-1-phosphate uridyltransferase family. In the C-terminal section; belongs to the transferase hexapeptide repeat family. In terms of assembly, homotrimer. The cofactor is Mg(2+).

The protein resides in the cytoplasm. The enzyme catalyses alpha-D-glucosamine 1-phosphate + acetyl-CoA = N-acetyl-alpha-D-glucosamine 1-phosphate + CoA + H(+). It catalyses the reaction N-acetyl-alpha-D-glucosamine 1-phosphate + UTP + H(+) = UDP-N-acetyl-alpha-D-glucosamine + diphosphate. The protein operates within nucleotide-sugar biosynthesis; UDP-N-acetyl-alpha-D-glucosamine biosynthesis; N-acetyl-alpha-D-glucosamine 1-phosphate from alpha-D-glucosamine 6-phosphate (route II): step 2/2. It participates in nucleotide-sugar biosynthesis; UDP-N-acetyl-alpha-D-glucosamine biosynthesis; UDP-N-acetyl-alpha-D-glucosamine from N-acetyl-alpha-D-glucosamine 1-phosphate: step 1/1. It functions in the pathway bacterial outer membrane biogenesis; LPS lipid A biosynthesis. Its function is as follows. Catalyzes the last two sequential reactions in the de novo biosynthetic pathway for UDP-N-acetylglucosamine (UDP-GlcNAc). The C-terminal domain catalyzes the transfer of acetyl group from acetyl coenzyme A to glucosamine-1-phosphate (GlcN-1-P) to produce N-acetylglucosamine-1-phosphate (GlcNAc-1-P), which is converted into UDP-GlcNAc by the transfer of uridine 5-monophosphate (from uridine 5-triphosphate), a reaction catalyzed by the N-terminal domain. This is Bifunctional protein GlmU from Shewanella oneidensis (strain ATCC 700550 / JCM 31522 / CIP 106686 / LMG 19005 / NCIMB 14063 / MR-1).